Reading from the N-terminus, the 220-residue chain is Deoxyribose-phosphate aldolase (220 aa).

The Proton donor/acceptor role is filled by Asp-89. Residue Lys-151 is the Schiff-base intermediate with acetaldehyde of the active site. Lys-180 functions as the Proton donor/acceptor in the catalytic mechanism.

The protein belongs to the DeoC/FbaB aldolase family. DeoC type 1 subfamily.

It is found in the cytoplasm. The catalysed reaction is 2-deoxy-D-ribose 5-phosphate = D-glyceraldehyde 3-phosphate + acetaldehyde. It participates in carbohydrate degradation; 2-deoxy-D-ribose 1-phosphate degradation; D-glyceraldehyde 3-phosphate and acetaldehyde from 2-deoxy-alpha-D-ribose 1-phosphate: step 2/2. Functionally, catalyzes a reversible aldol reaction between acetaldehyde and D-glyceraldehyde 3-phosphate to generate 2-deoxy-D-ribose 5-phosphate. The sequence is that of Deoxyribose-phosphate aldolase from Streptococcus suis (strain 05ZYH33).